Here is a 151-residue protein sequence, read N- to C-terminus: Immunity protein YezG (151 aa).

The stretch at 62–90 (KDIFKTLLRELRELFEELRTEHRNNNDDV) forms a coiled coil.

In terms of assembly, interacts with cognate toxin YeeF but not with non-cognate toxin YobL. The interaction probably inhibits the toxic activity of YeeF. May bind with a stoichiometry of 2:2 to YeeF.

The protein resides in the cytoplasm. Its function is as follows. Immunity component of one of 6 LXG toxin-immunity modules in this strain. They promote kin selection, mediate competition in biofilms, and drive spatial segregation of different strains, indicating that LXG toxins may help avoid warfare between strains in biofilms. Mediates intercellular competition during biofilm formation; disruption of the operon disadvantages the bacteria, but overexpression of the cognate immunity protein restores growth in competition with wild-type. In situ neutralizes the toxic effect of cognate toxin YeeF. Probably neutralizes the ability to inhibit growth of cognate toxin YeeF. Probably does not have immunity protein activity on other LXG toxins. This chain is Immunity protein YezG (yezG), found in Bacillus subtilis (strain 168).